Here is a 400-residue protein sequence, read N- to C-terminus: Phosphoglycerate kinase (400 aa).

Substrate contacts are provided by residues 24–26 (DFN), R39, 62–65 (HLGK), R123, and R156. ATP-binding positions include K207, G298, E329, and 356–359 (GGDS).

This sequence belongs to the phosphoglycerate kinase family. Monomer.

Its subcellular location is the cytoplasm. It catalyses the reaction (2R)-3-phosphoglycerate + ATP = (2R)-3-phospho-glyceroyl phosphate + ADP. It functions in the pathway carbohydrate degradation; glycolysis; pyruvate from D-glyceraldehyde 3-phosphate: step 2/5. The protein is Phosphoglycerate kinase of Clostridioides difficile (strain 630) (Peptoclostridium difficile).